Consider the following 157-residue polypeptide: 2-C-methyl-D-erythritol 2,4-cyclodiphosphate synthase (157 aa).

Residues aspartate 8 and histidine 10 each contribute to the a divalent metal cation site. 4-CDP-2-C-methyl-D-erythritol 2-phosphate is bound by residues 8-10 and 34-35; these read DVH and HS. Histidine 42 contacts a divalent metal cation. Residues 56-58, 132-135, and arginine 142 each bind 4-CDP-2-C-methyl-D-erythritol 2-phosphate; these read DIG and TTNE.

It belongs to the IspF family. In terms of assembly, homotrimer. A divalent metal cation serves as cofactor.

It catalyses the reaction 4-CDP-2-C-methyl-D-erythritol 2-phosphate = 2-C-methyl-D-erythritol 2,4-cyclic diphosphate + CMP. Its pathway is isoprenoid biosynthesis; isopentenyl diphosphate biosynthesis via DXP pathway; isopentenyl diphosphate from 1-deoxy-D-xylulose 5-phosphate: step 4/6. Functionally, involved in the biosynthesis of isopentenyl diphosphate (IPP) and dimethylallyl diphosphate (DMAPP), two major building blocks of isoprenoid compounds. Catalyzes the conversion of 4-diphosphocytidyl-2-C-methyl-D-erythritol 2-phosphate (CDP-ME2P) to 2-C-methyl-D-erythritol 2,4-cyclodiphosphate (ME-CPP) with a corresponding release of cytidine 5-monophosphate (CMP). This is 2-C-methyl-D-erythritol 2,4-cyclodiphosphate synthase from Chlorobium phaeovibrioides (strain DSM 265 / 1930) (Prosthecochloris vibrioformis (strain DSM 265)).